A 106-amino-acid chain; its full sequence is COX assembly mitochondrial protein homolog (106 aa).

A2 carries the post-translational modification N-acetylalanine. In terms of domain architecture, CHCH spans 28-71 (RERCSEQVQDFTKCCKDSGVLMVVKCRKENSALKDCLTSYYKDP). Short sequence motifs (cx9C motif) lie at residues 31–41 (CSEQVQDFTKC) and 53–63 (CRKENSALKDC). Intrachain disulfides connect C31/C63 and C41/C53.

Belongs to the CMC family. As to quaternary structure, component of the MITRAC (mitochondrial translation regulation assembly intermediate of cytochrome c oxidase complex) complex, the core components of this complex being COA3/MITRAC12 and COX14.

It localises to the mitochondrion. In terms of biological role, component of the MITRAC (mitochondrial translation regulation assembly intermediate of cytochrome c oxidase complex) complex, that regulates cytochrome c oxidase assembly. The chain is COX assembly mitochondrial protein homolog (CMC1) from Bos taurus (Bovine).